The following is a 247-amino-acid chain: 1-(5-phosphoribosyl)-5-[(5-phosphoribosylamino)methylideneamino] imidazole-4-carboxamide isomerase (247 aa).

The active-site Proton acceptor is aspartate 8. Aspartate 131 acts as the Proton donor in catalysis.

The protein belongs to the HisA/HisF family.

The protein resides in the cytoplasm. It carries out the reaction 1-(5-phospho-beta-D-ribosyl)-5-[(5-phospho-beta-D-ribosylamino)methylideneamino]imidazole-4-carboxamide = 5-[(5-phospho-1-deoxy-D-ribulos-1-ylimino)methylamino]-1-(5-phospho-beta-D-ribosyl)imidazole-4-carboxamide. It participates in amino-acid biosynthesis; L-histidine biosynthesis; L-histidine from 5-phospho-alpha-D-ribose 1-diphosphate: step 4/9. This Cupriavidus metallidurans (strain ATCC 43123 / DSM 2839 / NBRC 102507 / CH34) (Ralstonia metallidurans) protein is 1-(5-phosphoribosyl)-5-[(5-phosphoribosylamino)methylideneamino] imidazole-4-carboxamide isomerase.